The chain runs to 192 residues: MLPPALNIPKWLEANSHLLQPPVNNYCVYHPSSPATAGYTVMIVGGPNARTDYHINTTPEFFYQYRGSMLLKTVDTSVSPPVFQDIPIHEGSIFLLPANTPHCPVRFKDTVGVVMEQPRAEGAVDQMRWYCRGCGEIVWEKQFVCTDLGTQVKEVVEEFGADQEKRTCKACGTIAETRFKEGEIVQPPRFVE.

Arginine 50 lines the O2 pocket. Fe cation is bound by residues histidine 54, glutamate 60, and histidine 102. Glutamate 60 is a substrate binding site. Residues arginine 106 and glutamate 116 each coordinate substrate. Residues cysteine 131, cysteine 134, cysteine 168, and cysteine 171 each coordinate a divalent metal cation.

The protein belongs to the 3-HAO family. Fe(2+) serves as cofactor.

It is found in the cytoplasm. It carries out the reaction 3-hydroxyanthranilate + O2 = (2Z,4Z)-2-amino-3-carboxymuconate 6-semialdehyde. Its pathway is cofactor biosynthesis; NAD(+) biosynthesis; quinolinate from L-kynurenine: step 3/3. Catalyzes the oxidative ring opening of 3-hydroxyanthranilate to 2-amino-3-carboxymuconate semialdehyde, which spontaneously cyclizes to quinolinate. This Aspergillus clavatus (strain ATCC 1007 / CBS 513.65 / DSM 816 / NCTC 3887 / NRRL 1 / QM 1276 / 107) protein is 3-hydroxyanthranilate 3,4-dioxygenase 1 (bna1-1).